The primary structure comprises 65 residues: Weak toxin CM-10 (65 aa).

5 cysteine pairs are disulfide-bonded: C3–C24, C6–C11, C17–C42, C46–C57, and C58–C63.

This sequence belongs to the three-finger toxin family. Ancestral subfamily. Orphan group II sub-subfamily. Expressed by the venom gland.

The protein localises to the secreted. Its function is as follows. Binds with low affinity to muscular (alpha-1-beta-1-delta-epsilon/CHRNA1-CHRNB1-CHRND-CHRNE) and very low affinity to neuronal (alpha-7/CHRNA7) nicotinic acetylcholine receptor (nAChR). In Naja nivea (Cape cobra), this protein is Weak toxin CM-10.